The primary structure comprises 464 residues: Citrate synthase, mitochondrial (464 aa).

Residues 1–27 (MALLTAAARLFGAKNASCLVLAARHAS) constitute a mitochondrion transit peptide. The SIFI-degron signature appears at 2–21 (ALLTAAARLFGAKNASCLVL). Lys76 is subject to N6-acetyllysine; alternate. An N6-succinyllysine; alternate modification is found at Lys76. N6-succinyllysine occurs at positions 103 and 193. The residue at position 226 (Ser226) is a Phosphoserine. His301 is an active-site residue. N6-acetyllysine; alternate is present on residues Lys321 and Lys327. 2 positions are modified to N6-succinyllysine; alternate: Lys321 and Lys327. His347 is a catalytic residue. Arg356 is a binding site for oxaloacetate. Position 375 is an N6-acetyllysine; alternate (Lys375). At Lys375 the chain carries N6-succinyllysine; alternate. The residue at position 382 (Lys382) is an N6-acetyllysine. Lys393 is modified (N6-acetyllysine; alternate). At Lys393 the chain carries N6-succinyllysine; alternate. Lys395 bears the N6,N6,N6-trimethyllysine mark. Asp402 is a catalytic residue. Positions 428 and 448 each coordinate oxaloacetate. Lys450 is subject to N6-succinyllysine. N6-acetyllysine; alternate is present on Lys459. Lys459 carries the post-translational modification N6-succinyllysine; alternate.

This sequence belongs to the citrate synthase family. In terms of assembly, homodimer. Post-translationally, methylated. Trimethylation at Lys-395 by CSKMT decreases citrate synthase activity. In response to mitochondrial stress, the precursor protein is ubiquitinated by the SIFI complex in the cytoplasm before mitochondrial import, leading to its degradation. Within the SIFI complex, UBR4 initiates ubiquitin chain that are further elongated or branched by KCMF1.

Its subcellular location is the mitochondrion matrix. It catalyses the reaction oxaloacetate + acetyl-CoA + H2O = citrate + CoA + H(+). It participates in carbohydrate metabolism; tricarboxylic acid cycle; isocitrate from oxaloacetate: step 1/2. Functionally, key enzyme of the Krebs tricarboxylic acid cycle which catalyzes the synthesis of citrate from acetyl coenzyme A and oxaloacetate. The chain is Citrate synthase, mitochondrial (CS) from Sus scrofa (Pig).